The sequence spans 143 residues: Transcriptional regulator MraZ (143 aa).

SpoVT-AbrB domains follow at residues 5 to 47 and 76 to 119; these read EYNH…SSDE and ASEC…SNVE.

Belongs to the MraZ family. As to quaternary structure, forms oligomers.

It localises to the cytoplasm. The protein resides in the nucleoid. In Alkaliphilus oremlandii (strain OhILAs) (Clostridium oremlandii (strain OhILAs)), this protein is Transcriptional regulator MraZ.